A 523-amino-acid polypeptide reads, in one-letter code: Cytochrome P450 52A3-B (523 aa).

A helical membrane pass occupies residues tryptophan 17–leucine 34. Residue cysteine 471 coordinates heme.

The protein belongs to the cytochrome P450 family. It depends on heme as a cofactor.

The protein localises to the membrane. Together with an NADPH cytochrome P450 the enzyme system catalyzes the terminal hydroxylation as the first step in the assimilation of alkanes and fatty acids. The protein is Cytochrome P450 52A3-B (CYP52A3-B) of Candida maltosa (Yeast).